A 359-amino-acid chain; its full sequence is Histidinol-phosphate aminotransferase (359 aa).

Lysine 217 carries the post-translational modification N6-(pyridoxal phosphate)lysine.

The protein belongs to the class-II pyridoxal-phosphate-dependent aminotransferase family. Histidinol-phosphate aminotransferase subfamily. As to quaternary structure, homodimer. Pyridoxal 5'-phosphate serves as cofactor.

It catalyses the reaction L-histidinol phosphate + 2-oxoglutarate = 3-(imidazol-4-yl)-2-oxopropyl phosphate + L-glutamate. It functions in the pathway amino-acid biosynthesis; L-histidine biosynthesis; L-histidine from 5-phospho-alpha-D-ribose 1-diphosphate: step 7/9. The chain is Histidinol-phosphate aminotransferase (hisC) from Salmonella typhimurium (strain LT2 / SGSC1412 / ATCC 700720).